A 369-amino-acid chain; its full sequence is Probable serine/threonine-protein kinase DDB_G0291350 (369 aa).

In terms of domain architecture, Protein kinase spans 22–367 (YTVNRILGEG…QVIERINQII (346 aa)). ATP-binding positions include 28–36 (LGEGGFSFV) and K51. D159 acts as the Proton acceptor in catalysis. The segment at 169–225 (NLRRPSNNNNNNNNNNNNNNNNNNNNNNNNNNNNNNNNNNNNNNNNNNNNNNNSEDS) is disordered. Residues 175 to 221 (NNNNNNNNNNNNNNNNNNNNNNNNNNNNNNNNNNNNNNNNNNNNNNN) show a composition bias toward low complexity.

This sequence belongs to the protein kinase superfamily. Ser/Thr protein kinase family.

It carries out the reaction L-seryl-[protein] + ATP = O-phospho-L-seryl-[protein] + ADP + H(+). The catalysed reaction is L-threonyl-[protein] + ATP = O-phospho-L-threonyl-[protein] + ADP + H(+). In Dictyostelium discoideum (Social amoeba), this protein is Probable serine/threonine-protein kinase DDB_G0291350.